The sequence spans 137 residues: Mediator of RNA polymerase II transcription subunit 21 (137 aa).

The tract at residues proline 37–proline 56 is disordered. The stretch at glycine 87 to threonine 130 forms a coiled coil.

The protein belongs to the Mediator complex subunit 21 family. As to quaternary structure, component of the Mediator complex.

It localises to the nucleus. In terms of biological role, component of the Mediator complex, a coactivator involved in the regulated transcription of nearly all RNA polymerase II-dependent genes. Mediator functions as a bridge to convey information from gene-specific regulatory proteins to the basal RNA polymerase II transcription machinery. Mediator is recruited to promoters by direct interactions with regulatory proteins and serves as a scaffold for the assembly of a functional preinitiation complex with RNA polymerase II and the general transcription factors. The polypeptide is Mediator of RNA polymerase II transcription subunit 21 (srb-7) (Neurospora crassa (strain ATCC 24698 / 74-OR23-1A / CBS 708.71 / DSM 1257 / FGSC 987)).